The chain runs to 343 residues: Thromboxane A2 receptor (343 aa).

Over 1–29 (MWPNGSSLGPCFRPTNITLEERRLIASPW) the chain is Extracellular. N-linked (GlcNAc...) asparagine glycans are attached at residues Asn4 and Asn16. A helical membrane pass occupies residues 30–52 (FAASFCVVGLASNLLALSVLAGA). Topologically, residues 53–66 (RQGGSHTRSSFLTF) are cytoplasmic. Residues 67–87 (LCGLVLTDFLGLLVTGTIVVS) form a helical membrane-spanning segment. Topologically, residues 88 to 106 (QHAALFEWHAVDPGCRLCR) are extracellular. Residues Cys105 and Cys183 are joined by a disulfide bond. A helical membrane pass occupies residues 107–128 (FMGVVMIFFGLSPLLLGAAMAS). The Cytoplasmic portion of the chain corresponds to 129 to 149 (ERYLGITRPFSRPAVASQRRA). The helical transmembrane segment at 150–172 (WATVGLVWAAALALGLLPLLGVG) threads the bilayer. At 173-193 (RYTVQYPGSWCFLTLGAESGD) the chain is on the extracellular side. The chain crosses the membrane as a helical span at residues 194–219 (VAFGLLFSMLGGLSVGLSFLLNTVSV). Residues 220–246 (ATLCHVYHGQEAAQQRPRDSEVEMMAQ) lie on the Cytoplasmic side of the membrane. A helical membrane pass occupies residues 247-270 (LLGIMVVASVCWLPLLVFIAQTVL). The Extracellular segment spans residues 271-289 (RNPPAMSPAGQLSRTTEKE). A helical transmembrane segment spans residues 290–311 (LLIYLRVATWNQILDPWVYILF). The Cytoplasmic portion of the chain corresponds to 312 to 343 (RRAVLRRLQPRLSTRPRSLSLQPQLTQRSGLQ). Residues Ser329 and Ser331 each carry the phosphoserine modification.

Belongs to the G-protein coupled receptor 1 family. In terms of assembly, interacts with RPGRIP1L. Interacts with PSMA3. Interacts with RACK1; the interaction regulates TBXA2R cell surface expression.

Its subcellular location is the cell membrane. In terms of biological role, receptor for thromboxane A2 (TXA2), a potent stimulator of platelet aggregation. The activity of this receptor is mediated by a G-protein that activates a phosphatidylinositol-calcium second messenger system. In the kidney, the binding of TXA2 to glomerular TP receptors causes intense vasoconstriction. Activates phospholipase C. Activates adenylyl cyclase. Functionally, inhibits adenylyl cyclase. In Homo sapiens (Human), this protein is Thromboxane A2 receptor (TBXA2R).